We begin with the raw amino-acid sequence, 178 residues long: CDP-diacylglycerol--glycerol-3-phosphate 3-phosphatidyltransferase (178 aa).

Transmembrane regions (helical) follow at residues 5 to 25, 32 to 52, 61 to 81, and 145 to 165; these read PNYL…LFYI, KLGA…GYIA, FGKM…TIML, and IIYL…LTII.

The protein belongs to the CDP-alcohol phosphatidyltransferase class-I family.

It localises to the cell membrane. It carries out the reaction a CDP-1,2-diacyl-sn-glycerol + sn-glycerol 3-phosphate = a 1,2-diacyl-sn-glycero-3-phospho-(1'-sn-glycero-3'-phosphate) + CMP + H(+). It participates in phospholipid metabolism; phosphatidylglycerol biosynthesis; phosphatidylglycerol from CDP-diacylglycerol: step 1/2. This protein catalyzes the committed step to the synthesis of the acidic phospholipids. The sequence is that of CDP-diacylglycerol--glycerol-3-phosphate 3-phosphatidyltransferase (pgsA) from Rickettsia typhi (strain ATCC VR-144 / Wilmington).